We begin with the raw amino-acid sequence, 431 residues long: Keratin, type I cytoskeletal 40 (431 aa).

Positions 1-89 are head; that stretch reads MASEGSPDCC…CEEGTFNSNE (89 aa). An IF rod domain is found at 89–400; that stretch reads EKETMQFLND…GLLEKEDSRL (312 aa). The tract at residues 90–124 is coil 1A; sequence KETMQFLNDRLASYLERVRSLEENNAELECRIREQ. Positions 125–135 are linker 1; sequence CEPDATPVCPD. The tract at residues 136-236 is coil 1B; that stretch reads YQRYFDTIEE…HEEEVNLLRE (101 aa). Residues 237–252 are linker 12; it reads QLGDRLNVELDTAPTV. Positions 253–396 are coil 2; sequence DLNKVLDEMR…NTYRGLLEKE (144 aa). Positions 397–431 are tail; that stretch reads DSRLPCNPGSTASISNSACEPCSAYVICTVENCCA.

Belongs to the intermediate filament family. Heterotetramer of two type I and two type II keratins.

In terms of biological role, may play a role in late hair differentiation. The polypeptide is Keratin, type I cytoskeletal 40 (Krt40) (Rattus norvegicus (Rat)).